Consider the following 644-residue polypeptide: Chaperone protein DnaK (644 aa).

2 disordered regions span residues 490-533 (QEEA…ELDD) and 570-644 (EELQ…EDDA). Residues 492 to 513 (EAEKHKEEDEARRERIEARNEA) show a composition bias toward basic and acidic residues. The segment covering 523-533 (LLEENEEELDD) has biased composition (acidic residues). Residues 588-622 (GPGGAGGAAGAGPGGMGGMGGAAGPGGAGGAGPGG) show a composition bias toward gly residues. A compositionally biased stretch (acidic residues) spans 624–644 (DADDEEYVDADFEDVDDEDDA).

The protein belongs to the heat shock protein 70 family.

Acts as a chaperone. In Halorubrum lacusprofundi (strain ATCC 49239 / DSM 5036 / JCM 8891 / ACAM 34), this protein is Chaperone protein DnaK.